The following is a 432-amino-acid chain: MQVSVETTQGLGRRVTITIAADSIETAVKSELVNVAKKVRIDGFRKGKVPMNIVAQRYGASVRQDVLGDLMSRNFIDAIIKEKINPAGAPTYVPGEYKLGEDFTYSVEFEVYPEVELQGLEAIEVEKPIVEVTDADVDGMLDTLRKQQATWKEKDSAVEAEDRVTIDFTGSVDSEEFEGGKASDFVLAMGQGRMIPGFEDGIKGHKAGEEFTIDVTFPEEYHAENLKGKAAKFAINLKKVEERELPELTAEFIKRFGVEDGSVEGLRAEVRKNMERELKSAIRNRVKSQAIEGLVKANDIDVPAALIDSEIDVLRRQAAQRFGGNEKQALELPRELFEEQAKRRVVVGLLLGEVIRTNELKADEERVKGLIEEMASAYEDPKEVIEFYSKNKELMDNMRNVALEEQAVEAVLAKAKVTEKETTFNELMNQQA.

A PPIase FKBP-type domain is found at 161–246; sequence EDRVTIDFTG…LKKVEERELP (86 aa).

This sequence belongs to the FKBP-type PPIase family. Tig subfamily. In terms of assembly, homodimer and monomer. In vivo most of the ribosomes are in complex with monomeric TF. Uncomplexed TF, however, is in a monomer-dimer equilibrium with approximately two thirds of TF existing in a dimeric state.

The protein localises to the cytoplasm. It catalyses the reaction [protein]-peptidylproline (omega=180) = [protein]-peptidylproline (omega=0). Functionally, involved in protein export. Acts as a chaperone by maintaining the newly synthesized protein in an open conformation. Functions as a peptidyl-prolyl cis-trans isomerase. This Shigella boydii serotype 4 (strain Sb227) protein is Trigger factor.